The chain runs to 296 residues: MSDKHINLVIVTGMSGAGKTVAIQSFEDLGYFTIDNMPPALVPKFLELIEQTNENRRVALVVDMRSRLFFKEINSTLDSIESNPSIDFRILFLDATDGELVSRYKETRRSHPLAADGRVLDGIRLERELLSPLKSMSQHVVDTTKLTPRQLRKTISDQFSEGSNQASFRIEVMSFGFKYGLPLDADLVFDVRFLPNPYYKVELREKTGLDEDVFNYVMSHPESEVFYKHLLNLIVPILPAYQKEGKSVLTVAIGCTGGQHRSVAFAHCLAESLATDWSVNESHRDQNRRKETVNRS.

13-20 (GMSGAGKT) serves as a coordination point for ATP. 63–66 (DMRS) provides a ligand contact to GTP.

This sequence belongs to the RapZ-like family.

Its function is as follows. Displays ATPase and GTPase activities. The polypeptide is Nucleotide-binding protein M28_Spy0517 (Streptococcus pyogenes serotype M28 (strain MGAS6180)).